We begin with the raw amino-acid sequence, 64 residues long: Large ribosomal subunit protein bL35 (64 aa).

The segment at 19–44 is disordered; the sequence is TGKLKASRPGRRHKLTGKTPKRKRQL. The span at 23–44 shows a compositional bias: basic residues; it reads KASRPGRRHKLTGKTPKRKRQL.

This sequence belongs to the bacterial ribosomal protein bL35 family.

The sequence is that of Large ribosomal subunit protein bL35 from Protochlamydia amoebophila (strain UWE25).